A 275-amino-acid chain; its full sequence is NH(3)-dependent NAD(+) synthetase (275 aa).

50 to 57 (GISGGVDS) contributes to the ATP binding site. Residue aspartate 56 coordinates Mg(2+). Arginine 147 is a deamido-NAD(+) binding site. An ATP-binding site is contributed by threonine 167. Glutamate 172 provides a ligand contact to Mg(2+). The deamido-NAD(+) site is built by lysine 180 and aspartate 187. Lysine 196 and threonine 218 together coordinate ATP. Position 267–268 (267–268 (HK)) interacts with deamido-NAD(+).

This sequence belongs to the NAD synthetase family. In terms of assembly, homodimer.

The enzyme catalyses deamido-NAD(+) + NH4(+) + ATP = AMP + diphosphate + NAD(+) + H(+). It functions in the pathway cofactor biosynthesis; NAD(+) biosynthesis; NAD(+) from deamido-NAD(+) (ammonia route): step 1/1. In terms of biological role, catalyzes the ATP-dependent amidation of deamido-NAD to form NAD. Uses ammonia as a nitrogen source. The protein is NH(3)-dependent NAD(+) synthetase of Stutzerimonas stutzeri (strain A1501) (Pseudomonas stutzeri).